Here is a 431-residue protein sequence, read N- to C-terminus: UDP-N-acetylmuramoylalanine--D-glutamate ligase (431 aa).

111–117 contributes to the ATP binding site; it reads GTDGKST.

Belongs to the MurCDEF family.

The protein resides in the cytoplasm. It catalyses the reaction UDP-N-acetyl-alpha-D-muramoyl-L-alanine + D-glutamate + ATP = UDP-N-acetyl-alpha-D-muramoyl-L-alanyl-D-glutamate + ADP + phosphate + H(+). It functions in the pathway cell wall biogenesis; peptidoglycan biosynthesis. Cell wall formation. Catalyzes the addition of glutamate to the nucleotide precursor UDP-N-acetylmuramoyl-L-alanine (UMA). The protein is UDP-N-acetylmuramoylalanine--D-glutamate ligase of Petrotoga mobilis (strain DSM 10674 / SJ95).